A 314-amino-acid polypeptide reads, in one-letter code: Glycine--tRNA ligase alpha subunit (314 aa).

It belongs to the class-II aminoacyl-tRNA synthetase family. Tetramer of two alpha and two beta subunits.

The protein localises to the cytoplasm. It catalyses the reaction tRNA(Gly) + glycine + ATP = glycyl-tRNA(Gly) + AMP + diphosphate. This chain is Glycine--tRNA ligase alpha subunit, found in Leuconostoc citreum (strain KM20).